A 646-amino-acid polypeptide reads, in one-letter code: A-kinase anchor protein 8-like (646 aa).

Residues 1–268 form a sufficient for activation of CTE-mediated expression region; sequence MSYTGFVQGS…MRRTWKTWTT (268 aa). The residue at position 208 (Arg-208) is an Asymmetric dimethylarginine; alternate. Omega-N-methylarginine; alternate is present on Arg-208. Arg-217, Arg-237, and Arg-247 each carry omega-N-methylarginine. Lys-257 carries the post-translational modification N6-acetyllysine. Residues 264 to 381 are disordered; sequence KTWTTADFRT…QDKQKKRQRD (118 aa). Position 267 is a phosphothreonine (Thr-267). A Nuclear localization signal motif is present at residues 274 to 279; that stretch reads KKKKRK. A Nuclear export signal (NES) motif is present at residues 280–296; that stretch reads QGGSPDEPDSKATRTDC. Position 283 is a phosphoserine (Ser-283). Residues 287–296 show a composition bias toward basic and acidic residues; sequence PDSKATRTDC. A Phosphothreonine modification is found at Thr-292. Ser-297 bears the Phosphoserine mark. A compositionally biased stretch (acidic residues) spans 298–314; sequence DNSDSDNDEGTEGEATE. Positions 337–349 are enriched in basic and acidic residues; it reads EDGREEGKEDPEK. The Nuclear localization signal motif lies at 362–364; it reads KRK. 2 C2H2 AKAP95-type zinc fingers span residues 391–413 and 484–507; these read CSLC…SKFH and CAAC…TMDH. The disordered stretch occupies residues 545 to 646; that stretch reads GENPFTDSPE…DDEEGGGGAP (102 aa). Ser-552 bears the Phosphoserine mark. Residues 552 to 563 are compositionally biased toward acidic residues; that stretch reads SPEEEKEQEEAE. Residues 564-586 are compositionally biased toward low complexity; it reads GGALDEGAQGEAAGISEGAEGVP. Positions 587-607 are enriched in pro residues; the sequence is AQPPVPPEPAPGAVSPPPPPP. Positions 634 to 646 are enriched in acidic residues; it reads DVEDDEEGGGGAP.

The protein belongs to the AKAP95 family. Interacts (via N-terminus) with DHX9 (via RGG region). Interacts with TMPO isoform Beta, PRPF40A, RNF43, lamin-B. Interacts with HDAC3; increased during mitosis. Interacts with EBV EBNA-LP. Interacts with HIV-1 reverse transcriptase/ribonuclease H. Phosphorylated on serine or threonine residues possibly by PKA; probably modulating the interaction with TMPO isoform Beta. As to expression, ubiquitously expressed. Expressed in the brain cortex (at protein level).

The protein resides in the nucleus. The protein localises to the nucleus matrix. It localises to the nucleus speckle. It is found in the PML body. Its subcellular location is the cytoplasm. In terms of biological role, could play a role in constitutive transport element (CTE)-mediated gene expression by association with DHX9. Increases CTE-dependent nuclear unspliced mRNA export. Proposed to target PRKACA to the nucleus but does not seem to be implicated in the binding of regulatory subunit II of PKA. May be involved in nuclear envelope breakdown and chromatin condensation. May be involved in anchoring nuclear membranes to chromatin in interphase and in releasing membranes from chromating at mitosis. May regulate the initiation phase of DNA replication when associated with TMPO isoform Beta. Required for cell cycle G2/M transition and histone deacetylation during mitosis. In mitotic cells recruits HDAC3 to the vicinity of chromatin leading to deacetylation and subsequent phosphorylation at 'Ser-10' of histone H3; in this function seems to act redundantly with AKAP8. May be involved in regulation of pre-mRNA splicing. Functionally, (Microbial infection) In case of EBV infection, may target PRKACA to EBNA-LP-containing nuclear sites to modulate transcription from specific promoters. Its function is as follows. (Microbial infection) Can synergize with DHX9 to activate the CTE-mediated gene expression of type D retroviruses. (Microbial infection) In case of HIV-1 infection, involved in the DHX9-promoted annealing of host tRNA(Lys3) to viral genomic RNA as a primer in reverse transcription; in vitro negatively regulates DHX9 annealing activity. The protein is A-kinase anchor protein 8-like (AKAP8L) of Homo sapiens (Human).